The chain runs to 197 residues: Presequence translocated-associated motor subunit PAM17, mitochondrial (197 aa).

The transit peptide at 1–14 (MFTSAIRLSSQRLF) directs the protein to the mitochondrion. 2 helical membrane-spanning segments follow: residues 64–84 (INVG…WAYL) and 103–123 (VISA…PIVG).

Belongs to the PAM17 family. As to quaternary structure, component of the PAM complex, at least composed of mtHsp70, MGE1, TIM44, PAM16, PAM17 and PAM18/TIM14.

It is found in the mitochondrion inner membrane. Functionally, component of the PAM complex, a complex required for the translocation of transit peptide-containing proteins from the inner membrane into the mitochondrial matrix in an ATP-dependent manner. In the complex, it is required to organize PAM16-PAM18 (TIM16-TIM14) heterodimer. This chain is Presequence translocated-associated motor subunit PAM17, mitochondrial (PAM17), found in Saccharomyces cerevisiae (strain ATCC 204508 / S288c) (Baker's yeast).